The chain runs to 237 residues: Nodulation protein NolA (237 aa).

Residues 10 to 79 (RWRIGELAEA…LVEIRKAMEG (70 aa)) form the HTH merR-type domain. Positions 13–32 (IGELAEATGVTVRTLHHYEH) form a DNA-binding region, H-T-H motif.

In terms of biological role, involved in genotype-specific nodulation of soybeans. The protein is Nodulation protein NolA (nolA) of Bradyrhizobium diazoefficiens (strain JCM 10833 / BCRC 13528 / IAM 13628 / NBRC 14792 / USDA 110).